A 151-amino-acid chain; its full sequence is 3-hydroxyacyl-[acyl-carrier-protein] dehydratase FabZ (151 aa).

Histidine 52 is an active-site residue.

Belongs to the thioester dehydratase family. FabZ subfamily.

Its subcellular location is the cytoplasm. It carries out the reaction a (3R)-hydroxyacyl-[ACP] = a (2E)-enoyl-[ACP] + H2O. Functionally, involved in unsaturated fatty acids biosynthesis. Catalyzes the dehydration of short chain beta-hydroxyacyl-ACPs and long chain saturated and unsaturated beta-hydroxyacyl-ACPs. This chain is 3-hydroxyacyl-[acyl-carrier-protein] dehydratase FabZ (fabZ1), found in Lactococcus lactis subsp. lactis (strain IL1403) (Streptococcus lactis).